The following is a 348-amino-acid chain: Histone PARylation factor 1 (348 aa).

The span at 1–10 (MAGRGKRKPR) shows a compositional bias: basic residues. Residues 1 to 38 (MAGRGKRKPRSLPQTETPNGEVKKAKEGLKDDKTSVGE) are disordered. Residues 21-38 (EVKKAKEGLKDDKTSVGE) show a composition bias toward basic and acidic residues. The stretch at 170–200 (LQKKKKEKRQQKDDAALNRLEEDLKREAERL) forms a coiled coil. Glutamate 285 (proton donor) is an active-site residue.

It belongs to the HPF1 family. Interacts with PARP1 (via the PARP catalytic domain). Interacts with PARP2 (via the PARP catalytic domain). Interacts with core nucleosomes in a parp1- and parp2-dependent manner. In adult, mainly expressed in gonads.

The protein localises to the chromosome. Its subcellular location is the nucleus. Its function is as follows. Cofactor for serine ADP-ribosylation that confers serine specificity on parp1 and parp2 and plays a key role in DNA damage response. Initiates the repair of double-strand DNA breaks: recruited to DNA damage sites by parp1 and parp2 and switches the amino acid specificity of parp1 and parp2 from aspartate or glutamate to serine residues, licensing serine ADP-ribosylation of target proteins. Serine ADP-ribosylation of target proteins, such as histones, promotes decompaction of chromatin and the recruitment of repair factors leading to the reparation of DNA strand breaks. Serine ADP-ribosylation of proteins constitutes the primary form of ADP-ribosylation of proteins in response to DNA damage. Hpf1 acts by completing the active site of parp1 and parp2: forms a composite active site composed of residues from Hpf1 and parp1 or parp2. While hpf1 promotes the initiation of serine ADP-ribosylation, it restricts the polymerase activity of parp1 and parp2 in order to limit the length of poly-ADP-ribose chains. Hpf1 also promotes tyrosine ADP-ribosylation, probably by conferring tyrosine specificity on parp1. The polypeptide is Histone PARylation factor 1 (Danio rerio (Zebrafish)).